A 479-amino-acid polypeptide reads, in one-letter code: Nucleoside-diphosphatase uda-1 (479 aa).

The Cytoplasmic portion of the chain corresponds to 1–7 (MLFPAFS). Residues 8 to 24 (ILLISFFSLLSVVTTKT) form a helical; Signal-anchor for type II membrane protein membrane-spanning segment. At 25 to 479 (QYWCHGDGVL…VLSYFNIISV (455 aa)) the chain is on the lumenal side. The active-site Proton acceptor is the Glu-171. N-linked (GlcNAc...) asparagine glycans are attached at residues Asn-300 and Asn-452.

It belongs to the GDA1/CD39 NTPase family. Ca(2+) is required as a cofactor. Mg(2+) serves as cofactor. Requires Mn(2+) as cofactor.

The protein resides in the endomembrane system. It carries out the reaction a ribonucleoside 5'-diphosphate + H2O = a ribonucleoside 5'-phosphate + phosphate + H(+). Hydrolyzes UDP and GDP but not any other nucleoside di-, mono- or triphosphates. May promote reglycosylation reactions involved in glycoproteins folding and quality control in the endoplasmic reticulum. This Caenorhabditis elegans protein is Nucleoside-diphosphatase uda-1 (uda-1).